Here is a 572-residue protein sequence, read N- to C-terminus: Proline--tRNA ligase (572 aa).

The protein belongs to the class-II aminoacyl-tRNA synthetase family. ProS type 1 subfamily. As to quaternary structure, homodimer.

The protein localises to the cytoplasm. The catalysed reaction is tRNA(Pro) + L-proline + ATP = L-prolyl-tRNA(Pro) + AMP + diphosphate. Its function is as follows. Catalyzes the attachment of proline to tRNA(Pro) in a two-step reaction: proline is first activated by ATP to form Pro-AMP and then transferred to the acceptor end of tRNA(Pro). As ProRS can inadvertently accommodate and process non-cognate amino acids such as alanine and cysteine, to avoid such errors it has two additional distinct editing activities against alanine. One activity is designated as 'pretransfer' editing and involves the tRNA(Pro)-independent hydrolysis of activated Ala-AMP. The other activity is designated 'posttransfer' editing and involves deacylation of mischarged Ala-tRNA(Pro). The misacylated Cys-tRNA(Pro) is not edited by ProRS. This Escherichia coli O157:H7 protein is Proline--tRNA ligase.